Reading from the N-terminus, the 241-residue chain is MSREDLEARLRAIGAERYHDKHPFHHKLHGGDCTPDQVRAWVINRWAYQAAIPMKDAAFLSRCADPDIRRAWRSRIEDHDGGVDSGGGLRRWLKLAEAVGLDPDYVASGRGILPATRFAVEAYFHYVREQPLLQAVASSLTELFAPKIHENRIEGLLRHYDFADESSLSYFRKRLSEAPRDVAYGLGWVLDHADTPEKEDMACAALIFKTDVLWAQLDALWGAYVDGHVPPGAWRPGEGMA.

It belongs to the PqqC family.

The enzyme catalyses 6-(2-amino-2-carboxyethyl)-7,8-dioxo-1,2,3,4,7,8-hexahydroquinoline-2,4-dicarboxylate + 3 O2 = pyrroloquinoline quinone + 2 H2O2 + 2 H2O + H(+). It functions in the pathway cofactor biosynthesis; pyrroloquinoline quinone biosynthesis. Functionally, ring cyclization and eight-electron oxidation of 3a-(2-amino-2-carboxyethyl)-4,5-dioxo-4,5,6,7,8,9-hexahydroquinoline-7,9-dicarboxylic-acid to PQQ. The sequence is that of Pyrroloquinoline-quinone synthase from Ruegeria pomeroyi (strain ATCC 700808 / DSM 15171 / DSS-3) (Silicibacter pomeroyi).